The following is a 401-amino-acid chain: Arylacetamide deacetylase-like 2 (401 aa).

An N-terminal signal peptide occupies residues 1 to 18 (MGLKALCLGLLCVLFVSH). Positions 111–113 (HGG) match the Involved in the stabilization of the negatively charged intermediate by the formation of the oxyanion hole motif. A disulfide bridge links Cys-116 with Cys-338. Residues Ser-189, Asp-341, and His-371 contribute to the active site.

It belongs to the 'GDXG' lipolytic enzyme family.

It localises to the secreted. The sequence is that of Arylacetamide deacetylase-like 2 (AADACL2) from Homo sapiens (Human).